The chain runs to 209 residues: MRRTKAEAAETREAILLAAEQVFLERGVNQSTLTEIACYAGVTRGAIYFHFEDKLDIFQSIIGRARFPQEEIMLQAARFDHPNPLHILEQSIVAALELFATDERQQVVFTIINQRCEYVGEMAPVIDRLKEMRSDVLALFIGLLKVAERRGELASEWSAETAAQILLAMVGGFLNEWLHGEKGFDLIIHGSRVISTVIQSLRAPANIPQ.

One can recognise an HTH tetR-type domain in the interval 9–69; the sequence is AETREAILLA…SIIGRARFPQ (61 aa). A DNA-binding region (H-T-H motif) is located at residues 32–51; the sequence is TLTEIACYAGVTRGAIYFHF.

Represses expression of bepDE. The chain is HTH-type transcriptional repressor BepR (bepR) from Brucella suis biovar 1 (strain 1330).